Consider the following 196-residue polypeptide: Lipoprotein signal peptidase (196 aa).

The disordered stretch occupies residues 1–24 (MAEAERIIGMPENPDVDGTDEGGS). 3 consecutive transmembrane segments (helical) span residues 40–60 (ILAL…SKML), 92–112 (IGEA…VVIF), and 118–138 (LYSL…LGNL). Active-site residues include D155 and D169. The helical transmembrane segment at 164–184 (VFNLADSAIVCGGILIVILSF) threads the bilayer.

It belongs to the peptidase A8 family.

The protein resides in the cell membrane. It catalyses the reaction Release of signal peptides from bacterial membrane prolipoproteins. Hydrolyzes -Xaa-Yaa-Zaa-|-(S,diacylglyceryl)Cys-, in which Xaa is hydrophobic (preferably Leu), and Yaa (Ala or Ser) and Zaa (Gly or Ala) have small, neutral side chains.. It functions in the pathway protein modification; lipoprotein biosynthesis (signal peptide cleavage). This protein specifically catalyzes the removal of signal peptides from prolipoproteins. The sequence is that of Lipoprotein signal peptidase from Streptomyces griseus subsp. griseus (strain JCM 4626 / CBS 651.72 / NBRC 13350 / KCC S-0626 / ISP 5235).